The sequence spans 58 residues: Metallothionein (58 aa).

A beta region spans residues 1–29 (PDPCCAEGTCECEEGKCKAGCKCTSCRCS). Cys4, Cys5, Cys10, Cys12, Cys17, Cys21, Cys23, Cys26, Cys28, Cys31, Cys34, Cys38, Cys40, Cys46, Cys50, Cys54, Cys56, and Cys57 together coordinate a divalent metal cation. The interval 30-58 (PCEKCTSECECKSKEECAKNCTKPCSCCP) is alpha.

Metallothioneins have a high content of cysteine residues that bind various heavy metals. Class I MTS in crustacea are involved in the sequestration of elevated levels of heavy-metal ions. The polypeptide is Metallothionein (Potamon potamios).